The sequence spans 321 residues: Peroxidase 5 (321 aa).

The first 24 residues, 1 to 24 (MERFSLRFVLMMVSIILTSSICQA), serve as a signal peptide directing secretion. Glutamine 25 carries the post-translational modification Pyrrolidone carboxylic acid. Cystine bridges form between cysteine 35–cysteine 115, cysteine 68–cysteine 73, cysteine 121–cysteine 317, and cysteine 201–cysteine 227. Histidine 66 serves as the catalytic Proton acceptor. The Ca(2+) site is built by aspartate 67, valine 70, glycine 72, aspartate 74, and serine 76. Position 164 (proline 164) interacts with substrate. Residue histidine 194 coordinates heme b. Threonine 195 is a Ca(2+) binding site. Asparagine 211 carries an N-linked (GlcNAc...) asparagine glycan. The Ca(2+) site is built by aspartate 240, threonine 243, and aspartate 248. An N-linked (GlcNAc...) asparagine glycan is attached at asparagine 285.

It belongs to the peroxidase family. Classical plant (class III) peroxidase subfamily. Heme b serves as cofactor. Requires Ca(2+) as cofactor.

The protein localises to the secreted. It carries out the reaction 2 a phenolic donor + H2O2 = 2 a phenolic radical donor + 2 H2O. Functionally, removal of H(2)O(2), oxidation of toxic reductants, biosynthesis and degradation of lignin, suberization, auxin catabolism, response to environmental stresses such as wounding, pathogen attack and oxidative stress. These functions might be dependent on each isozyme/isoform in each plant tissue. This chain is Peroxidase 5 (PER5), found in Arabidopsis thaliana (Mouse-ear cress).